Consider the following 342-residue polypeptide: Protein pelota homolog (342 aa).

Belongs to the eukaryotic release factor 1 family. Pelota subfamily. As to quaternary structure, monomer. A divalent metal cation is required as a cofactor.

It is found in the cytoplasm. Functionally, may function in recognizing stalled ribosomes, interact with stem-loop structures in stalled mRNA molecules, and effect endonucleolytic cleavage of the mRNA. May play a role in the release non-functional ribosomes and degradation of damaged mRNAs. Has endoribonuclease activity. The protein is Protein pelota homolog of Methanocorpusculum labreanum (strain ATCC 43576 / DSM 4855 / Z).